Reading from the N-terminus, the 282-residue chain is Protease HtpX homolog (282 aa).

Helical transmembrane passes span 7–26 (TTVL…GAVG) and 30–49 (GMMI…YWFS). H131 contacts Zn(2+). The active site involves E132. H135 is a Zn(2+) binding site. 2 consecutive transmembrane segments (helical) span residues 141 to 161 (ILVS…ARMA) and 183 to 203 (LGLV…QLAI). E208 provides a ligand contact to Zn(2+).

It belongs to the peptidase M48B family. Zn(2+) is required as a cofactor.

The protein resides in the cell inner membrane. In Syntrophobacter fumaroxidans (strain DSM 10017 / MPOB), this protein is Protease HtpX homolog.